The primary structure comprises 390 residues: Pyruvate dehydrogenase E1 component subunit alpha, somatic form, mitochondrial (390 aa).

A mitochondrion-targeting transit peptide spans 1-29 (MRKMLAAVSRVLSGASQKPASRVLVASRN). Lys63 is subject to N6-acetyllysine; alternate. Lys63 is modified (N6-succinyllysine; alternate). 11 residues coordinate pyruvate: His92, Tyr118, Arg119, Ala157, Gly165, Val167, Asp196, Gly197, Ala198, Asn225, and Tyr227. The thiamine diphosphate site is built by Tyr118 and Arg119. Residues Gly165, Val167, Asp196, Gly197, Ala198, and Asn225 each coordinate thiamine diphosphate. Asp196 contributes to the Mg(2+) binding site. Asn225 and Tyr227 together coordinate Mg(2+). The residue at position 232 (Ser232) is a Phosphoserine; by PDK1. Lys244 is subject to N6-acetyllysine; alternate. At Lys244 the chain carries N6-succinyllysine; alternate. The residue at position 277 (Lys277) is an N6-succinyllysine. His292 serves as a coordination point for thiamine diphosphate. At Ser293 the chain carries Phosphoserine; by PDK1, PDK2, PDK3 and PDK4. The residue at position 295 (Ser295) is a Phosphoserine. The residue at position 300 (Ser300) is a Phosphoserine; by PDK1, PDK2, PDK3 and PDK4. Tyr301 is subject to Phosphotyrosine. Residue Lys313 is modified to N6-acetyllysine; alternate. N6-succinyllysine; alternate is present on Lys313. Residues Lys321 and Lys336 each carry the N6-acetyllysine modification. Lys385 carries the post-translational modification N6-succinyllysine.

In terms of assembly, heterotetramer of two PDHA1 and two PDHB subunits. The heterotetramer interacts with DLAT, and is part of the multimeric pyruvate dehydrogenase complex that contains multiple copies of pyruvate dehydrogenase (E1), dihydrolipoamide acetyltransferase (DLAT, E2) and lipoamide dehydrogenase (DLD, E3). These subunits are bound to an inner core composed of about 48 DLAT and 12 PDHX molecules. Thiamine diphosphate serves as cofactor. Requires Mg(2+) as cofactor. Post-translationally, phosphorylation at Ser-232, Ser-293 and Ser-300 by PDK family kinases inactivates the enzyme; for this phosphorylation at a single site is sufficient. Phosphorylation at Ser-293 interferes with access to active site, and thereby inactivates the enzyme. Dephosphorylation at all three sites, i.e. at Ser-232, Ser-293 and Ser-300, is required for reactivation. Acetylation alters the phosphorylation pattern. Deacetylated by SIRT3.

It is found in the mitochondrion matrix. It carries out the reaction N(6)-[(R)-lipoyl]-L-lysyl-[protein] + pyruvate + H(+) = N(6)-[(R)-S(8)-acetyldihydrolipoyl]-L-lysyl-[protein] + CO2. Pyruvate dehydrogenase activity is inhibited by phosphorylation of PDHA1; it is reactivated by dephosphorylation. In terms of biological role, the pyruvate dehydrogenase complex catalyzes the overall conversion of pyruvate to acetyl-CoA and CO(2), and thereby links the glycolytic pathway to the tricarboxylic cycle. The polypeptide is Pyruvate dehydrogenase E1 component subunit alpha, somatic form, mitochondrial (PDHA1) (Macaca fascicularis (Crab-eating macaque)).